Reading from the N-terminus, the 918-residue chain is UPF0182 protein CPR_0011 (918 aa).

Transmembrane regions (helical) follow at residues 8 to 28, 46 to 66, 91 to 111, 151 to 171, 200 to 220, 243 to 263, and 271 to 291; these read TVLI…NFII, LIAI…VIAI, FLLS…TTQW, AISL…ALGF, LAVL…LKSY, IFYK…FISI, and IIIS…VAIF.

This sequence belongs to the UPF0182 family.

It is found in the cell membrane. This is UPF0182 protein CPR_0011 from Clostridium perfringens (strain SM101 / Type A).